Here is a 202-residue protein sequence, read N- to C-terminus: MSYLGVGVSPGNVPVYHGMNLKVIDRRVRLAELVLRCVICALGVLAAVLVGTDTQVKEIFSIQKKARFTDMKALVFLVVANGIAAAYSLVQGVRCVVGMVKGSVLFSKPLAWVIFSGDQMMAYLTLSAVAAAVQSASFAKLGQPDLQWMKICNMYGKFCNQVGEGIASALLVSVSMVVLSCISSFSLFRLYGGNKGKDGARW.

Residues 1 to 29 (MSYLGVGVSPGNVPVYHGMNLKVIDRRVR) are Cytoplasmic-facing. A helical membrane pass occupies residues 30–50 (LAELVLRCVICALGVLAAVLV). Residues 51–72 (GTDTQVKEIFSIQKKARFTDMK) are Extracellular-facing. Residues 73–93 (ALVFLVVANGIAAAYSLVQGV) traverse the membrane as a helical segment. The Cytoplasmic segment spans residues 94–118 (RCVVGMVKGSVLFSKPLAWVIFSGD). The chain crosses the membrane as a helical span at residues 119–139 (QMMAYLTLSAVAAAVQSASFA). Residues 140 to 164 (KLGQPDLQWMKICNMYGKFCNQVGE) lie on the Extracellular side of the membrane. A helical transmembrane segment spans residues 165-185 (GIASALLVSVSMVVLSCISSF). Over 186–202 (SLFRLYGGNKGKDGARW) the chain is Cytoplasmic.

Belongs to the Casparian strip membrane proteins (CASP) family. Homodimer and heterodimers.

It localises to the cell membrane. In Populus trichocarpa (Western balsam poplar), this protein is CASP-like protein 2B2.